The primary structure comprises 421 residues: Gamma-glutamyl phosphate reductase (421 aa).

The protein belongs to the gamma-glutamyl phosphate reductase family.

Its subcellular location is the cytoplasm. It carries out the reaction L-glutamate 5-semialdehyde + phosphate + NADP(+) = L-glutamyl 5-phosphate + NADPH + H(+). Its pathway is amino-acid biosynthesis; L-proline biosynthesis; L-glutamate 5-semialdehyde from L-glutamate: step 2/2. Its function is as follows. Catalyzes the NADPH-dependent reduction of L-glutamate 5-phosphate into L-glutamate 5-semialdehyde and phosphate. The product spontaneously undergoes cyclization to form 1-pyrroline-5-carboxylate. The chain is Gamma-glutamyl phosphate reductase from Nocardia farcinica (strain IFM 10152).